The chain runs to 165 residues: Large ribosomal subunit protein uL22c (165 aa).

This sequence belongs to the universal ribosomal protein uL22 family. As to quaternary structure, part of the 50S ribosomal subunit.

Its subcellular location is the plastid. It localises to the chloroplast. Functionally, this protein binds specifically to 23S rRNA. The globular domain of the protein is located near the polypeptide exit tunnel on the outside of the subunit, while an extended beta-hairpin is found that lines the wall of the exit tunnel in the center of the 70S ribosome. The chain is Large ribosomal subunit protein uL22c (rpl22) from Daucus carota (Wild carrot).